The sequence spans 199 residues: ATP-dependent Clp protease proteolytic subunit (199 aa).

Ser-103 functions as the Nucleophile in the catalytic mechanism. The active site involves His-128.

The protein belongs to the peptidase S14 family. As to quaternary structure, fourteen ClpP subunits assemble into 2 heptameric rings which stack back to back to give a disk-like structure with a central cavity, resembling the structure of eukaryotic proteasomes.

The protein localises to the cytoplasm. The enzyme catalyses Hydrolysis of proteins to small peptides in the presence of ATP and magnesium. alpha-casein is the usual test substrate. In the absence of ATP, only oligopeptides shorter than five residues are hydrolyzed (such as succinyl-Leu-Tyr-|-NHMec, and Leu-Tyr-Leu-|-Tyr-Trp, in which cleavage of the -Tyr-|-Leu- and -Tyr-|-Trp bonds also occurs).. Cleaves peptides in various proteins in a process that requires ATP hydrolysis. Has a chymotrypsin-like activity. Plays a major role in the degradation of misfolded proteins. The chain is ATP-dependent Clp protease proteolytic subunit from Photobacterium profundum (strain SS9).